The sequence spans 95 residues: uncharacterized protein (95 aa).

The first 22 residues, Met1 to His22, serve as a signal peptide directing secretion. The Extracellular segment spans residues Leu23 to Thr52. The helical transmembrane segment at Ile53–His69 threads the bilayer. The Cytoplasmic segment spans residues Pro70–Cys95.

It localises to the host membrane. This is an uncharacterized protein from Acidianus bottle-shaped virus (isolate Italy/Pozzuoli) (ABV).